The primary structure comprises 93 residues: UPF0521 protein B (93 aa).

The stretch at 2 to 58 (SLKEVITSLKNDFHSINKEIDSMKENNEKQEEKIFQEIKKLKLEMELLRKDNLSFKT) forms a coiled coil.

The protein belongs to the UPF0521 family.

The polypeptide is UPF0521 protein B (Dictyostelium discoideum (Social amoeba)).